Here is a 392-residue protein sequence, read N- to C-terminus: Cyclic AMP receptor 1 (392 aa).

At 1–13 the chain is on the extracellular side; sequence MGLLDGNPANETS. N-linked (GlcNAc...) asparagine glycosylation occurs at Asn10. The helical transmembrane segment at 14–33 threads the bilayer; that stretch reads LVLLLFADFSSMLGCMAVLI. Topologically, residues 34-47 are cytoplasmic; the sequence is GFWRLKLLRNHVTK. A helical transmembrane segment spans residues 48 to 68; sequence VIACFCATSFCKDFPSTILTL. Residues 69-83 lie on the Extracellular side of the membrane; the sequence is TNTAVNGGFPCYLYA. Residues 84–109 form a helical membrane-spanning segment; sequence IVITYGSFACWLWTLCLAISIYMLIV. At 110–120 the chain is on the cytoplasmic side; sequence KREPEPERFEK. A helical transmembrane segment spans residues 121 to 139; sequence YYYLLCWGLPLISTIVMLA. The Extracellular segment spans residues 140 to 162; the sequence is KNTVQFVGNWCWIGVSFTGYRFG. Residues 163–181 traverse the membrane as a helical segment; sequence LFYGPFLFIWAISAVLVGL. The Cytoplasmic portion of the chain corresponds to 182–205; sequence TSRYTYVVIHNGVSDNKEKHLTYQ. A helical membrane pass occupies residues 206 to 224; it reads FKLINYIIVFLVCWVFAVV. The Extracellular portion of the chain corresponds to 225 to 235; the sequence is NRIVNGLNMFP. The helical transmembrane segment at 236–260 threads the bilayer; that stretch reads PALNILHTYLSVSHGFWASVTFIYN. Topologically, residues 261–392 are cytoplasmic; it reads NPLMWRYFGA…STSTNGQGNN (132 aa). Disordered stretches follow at residues 292-324 and 339-392; these read NKNNNNPSPYSSSRGTSGKTMGGHPTGDDVQCS and VNNQ…QGNN. A compositionally biased stretch (polar residues) spans 298-310; it reads PSPYSSSRGTSGK. Phosphoserine occurs at positions 299, 302, 303, 304, 308, 360, 361, 362, 363, 364, 366, 367, and 368. The segment covering 340–367 has biased composition (low complexity); that stretch reads NNQQNLNNNYGLQQNYNDEGSSSSSLSS. Polar residues predominate over residues 375–392; that stretch reads VEMQNIQISTSTNGQGNN.

Belongs to the G-protein coupled receptor 5 family. C-terminal Ser or Thr residues may be phosphorylated.

It localises to the membrane. In terms of biological role, receptor for cAMP. Coordinates the aggregation of individual cells into a multicellular organism and regulates the expression of a large number of developmentally regulated genes. The activity of this receptor is mediated by G proteins. This Dictyostelium discoideum (Social amoeba) protein is Cyclic AMP receptor 1 (carA-1).